The chain runs to 157 residues: Ribosome maturation factor RimP (157 aa).

This sequence belongs to the RimP family.

The protein localises to the cytoplasm. Its function is as follows. Required for maturation of 30S ribosomal subunits. In Limosilactobacillus reuteri (strain DSM 20016) (Lactobacillus reuteri), this protein is Ribosome maturation factor RimP.